We begin with the raw amino-acid sequence, 245 residues long: 5-oxoprolinase subunit A (245 aa).

The protein belongs to the LamB/PxpA family. As to quaternary structure, forms a complex composed of PxpA, PxpB and PxpC.

It catalyses the reaction 5-oxo-L-proline + ATP + 2 H2O = L-glutamate + ADP + phosphate + H(+). Its function is as follows. Catalyzes the cleavage of 5-oxoproline to form L-glutamate coupled to the hydrolysis of ATP to ADP and inorganic phosphate. This Neisseria meningitidis serogroup C (strain 053442) protein is 5-oxoprolinase subunit A.